We begin with the raw amino-acid sequence, 148 residues long: Nucleoside diphosphate kinase (148 aa).

The ATP site is built by Lys9, Phe57, Arg85, Thr91, Arg102, and Asn112. Catalysis depends on His115, which acts as the Pros-phosphohistidine intermediate.

The protein belongs to the NDK family. The cofactor is Mg(2+).

It carries out the reaction a 2'-deoxyribonucleoside 5'-diphosphate + ATP = a 2'-deoxyribonucleoside 5'-triphosphate + ADP. It catalyses the reaction a ribonucleoside 5'-diphosphate + ATP = a ribonucleoside 5'-triphosphate + ADP. Its function is as follows. Major role in the synthesis of nucleoside triphosphates other than ATP. The ATP gamma phosphate is transferred to the NDP beta phosphate via a ping-pong mechanism, using a phosphorylated active-site intermediate. In Helianthus annuus (Common sunflower), this protein is Nucleoside diphosphate kinase.